We begin with the raw amino-acid sequence, 257 residues long: Imidazole glycerol phosphate synthase subunit HisF (257 aa).

Residues Asp-12 and Asp-131 contribute to the active site.

It belongs to the HisA/HisF family. In terms of assembly, heterodimer of HisH and HisF.

It localises to the cytoplasm. The enzyme catalyses 5-[(5-phospho-1-deoxy-D-ribulos-1-ylimino)methylamino]-1-(5-phospho-beta-D-ribosyl)imidazole-4-carboxamide + L-glutamine = D-erythro-1-(imidazol-4-yl)glycerol 3-phosphate + 5-amino-1-(5-phospho-beta-D-ribosyl)imidazole-4-carboxamide + L-glutamate + H(+). It functions in the pathway amino-acid biosynthesis; L-histidine biosynthesis; L-histidine from 5-phospho-alpha-D-ribose 1-diphosphate: step 5/9. In terms of biological role, IGPS catalyzes the conversion of PRFAR and glutamine to IGP, AICAR and glutamate. The HisF subunit catalyzes the cyclization activity that produces IGP and AICAR from PRFAR using the ammonia provided by the HisH subunit. In Paraburkholderia phymatum (strain DSM 17167 / CIP 108236 / LMG 21445 / STM815) (Burkholderia phymatum), this protein is Imidazole glycerol phosphate synthase subunit HisF.